Consider the following 65-residue polypeptide: UPF0434 protein Rpal_0270 (65 aa).

The protein belongs to the UPF0434 family.

The chain is UPF0434 protein Rpal_0270 from Rhodopseudomonas palustris (strain TIE-1).